The sequence spans 297 residues: Protein MIZU-KUSSEI 1 (297 aa).

In terms of tissue distribution, expressed in root meristematic region, cortical cells, lateral root cap cells, columella cells of the root cap, mature region of the roots and leaf hydathodes.

It localises to the endoplasmic reticulum membrane. Plays a role in lateral root development by maintaining auxin levels. This function requires GNOM (GN/MIZ2) activity. Negatively regulates cytokinin sensitivity on root development. Positively regulates hydrotropism in roots. The chain is Protein MIZU-KUSSEI 1 (MIZ1) from Arabidopsis thaliana (Mouse-ear cress).